We begin with the raw amino-acid sequence, 707 residues long: Ornithine decarboxylase (707 aa).

Positions Asn83–Thr102 are disordered. Lys288 bears the N6-(pyridoxal phosphate)lysine mark. Pyridoxal 5'-phosphate is bound by residues Ser421, Gly458, and Glu498–Arg501. Phe561–Asp562 contributes to the substrate binding site. Residue Cys634 is the Proton donor; shared with dimeric partner of the active site. Asp635 serves as a coordination point for substrate. Tyr663 provides a ligand contact to pyridoxal 5'-phosphate.

Belongs to the Orn/Lys/Arg decarboxylase class-II family. As to quaternary structure, homodimer. Only the dimer is catalytically active, as the active sites are constructed of residues from both monomers. Pyridoxal 5'-phosphate serves as cofactor.

It carries out the reaction L-ornithine + H(+) = putrescine + CO2. It functions in the pathway amine and polyamine biosynthesis; putrescine biosynthesis via L-ornithine pathway; putrescine from L-ornithine: step 1/1. Inhibited by antizyme (AZ) in response to polyamine levels. AZ inhibits the assembly of the functional homodimer by binding to ODC monomers and targeting them for ubiquitin-independent proteolytic destruction by the 26S proteasome. Inhibited by 1-amino-oxy-3-aminopropane (APA, an isosteric analog of putrescine). Irreversibly inhibited by alpha-difluoromethylornithine (DFMO, a curative agent of West African sleeping sickness). Catalyzes the first and rate-limiting step of polyamine biosynthesis that converts ornithine into putrescine, which is the precursor for the polyamines, spermidine and spermine. Polyamines are essential for cell proliferation and are implicated in cellular processes, ranging from DNA replication to apoptosis. The sequence is that of Ornithine decarboxylase from Leishmania donovani.